The following is a 505-amino-acid chain: ATP synthase subunit alpha (505 aa).

170–177 lines the ATP pocket; that stretch reads GDRQTGKT.

The protein belongs to the ATPase alpha/beta chains family. As to quaternary structure, F-type ATPases have 2 components, CF(1) - the catalytic core - and CF(0) - the membrane proton channel. CF(1) has five subunits: alpha(3), beta(3), gamma(1), delta(1), epsilon(1). CF(0) has four main subunits: a, b, b' and c.

It is found in the cellular thylakoid membrane. It carries out the reaction ATP + H2O + 4 H(+)(in) = ADP + phosphate + 5 H(+)(out). Its function is as follows. Produces ATP from ADP in the presence of a proton gradient across the membrane. The alpha chain is a regulatory subunit. This chain is ATP synthase subunit alpha, found in Cyanothece sp. (strain PCC 7425 / ATCC 29141).